Consider the following 300-residue polypeptide: 11-beta-hydroxysteroid dehydrogenase 1 (300 aa).

Residues Met1 to Tyr7 lie on the Cytoplasmic side of the membrane. A helical; Signal-anchor for type II membrane protein membrane pass occupies residues Leu8–Asn24. Topologically, residues Glu25–Ala300 are lumenal. NADP(+) is bound by residues Gly41 to Ser67, Ser92 to Met93, and Asn119 to Tyr123. Residue Ser170 participates in substrate binding. Tyr183 (proton acceptor) is an active-site residue. Tyr183–Lys187 contributes to the NADP(+) binding site. N-linked (GlcNAc...) asparagine glycosylation occurs at Asn207. Residue Ile218–Thr222 coordinates NADP(+).

It belongs to the short-chain dehydrogenases/reductases (SDR) family. As to quaternary structure, homodimer. In terms of tissue distribution, widely expressed in all peripheral tissues, with highest expression in liver, followed by kidney and lung, and very low expression in heart, lung, spleen, stomach, small intestine, colon, skin, skeletal muscle, and ovary.

It is found in the endoplasmic reticulum membrane. It catalyses the reaction an 11beta-hydroxysteroid + NADP(+) = an 11-oxosteroid + NADPH + H(+). The catalysed reaction is cortisone + NADPH + H(+) = cortisol + NADP(+). The enzyme catalyses corticosterone + NADP(+) = 11-dehydrocorticosterone + NADPH + H(+). It carries out the reaction a 7beta-hydroxysteroid + NADP(+) = a 7-oxosteroid + NADPH + H(+). It catalyses the reaction 7-oxocholesterol + NADPH + H(+) = 7beta-hydroxycholesterol + NADP(+). The catalysed reaction is chenodeoxycholate + NADP(+) = 7-oxolithocholate + NADPH + H(+). The enzyme catalyses 7-oxolithocholate + NADPH + H(+) = ursodeoxycholate + NADP(+). It carries out the reaction glycochenodeoxycholate + NADP(+) = 7-oxoglycolithocholate + NADPH + H(+). It catalyses the reaction taurochenodeoxycholate + NADP(+) = 7-oxotaurolithocholate + NADPH + H(+). The catalysed reaction is tauroursodeoxycholate + NADP(+) = 7-oxotaurolithocholate + NADPH + H(+). The enzyme catalyses glycoursodeoxycholate + NADP(+) = 7-oxoglycolithocholate + NADPH + H(+). It carries out the reaction 7-oxopregnenolone + NADPH + H(+) = 7beta-hydroxypregnenolone + NADP(+). It catalyses the reaction 3beta,7alpha-dihydroxyandrost-5-en-17-one + NADP(+) = 3beta-hydroxy-5-androstene-7,17-dione + NADPH + H(+). The catalysed reaction is 3beta-hydroxy-5-androstene-7,17-dione + NADPH + H(+) = 3beta,7beta-dihydroxyandrost-5-en-17-one + NADP(+). The enzyme catalyses 3beta-hydroxy-5alpha-androstane-7,17-dione + NADPH + H(+) = 3beta,7beta-dihydroxy-5alpha-androstan-17-one + NADP(+). Its function is as follows. Controls the reversible conversion of biologically active glucocorticoids such as cortisone to cortisol, and 11-dehydrocorticosterone to corticosterone in the presence of NADP(H). Participates in the corticosteroid receptor-mediated anti-inflammatory response, as well as metabolic and homeostatic processes. Bidirectional in vitro, predominantly functions as a reductase in vivo, thereby increasing the concentration of active glucocorticoids. It has broad substrate specificity, besides glucocorticoids, it accepts other steroid and sterol substrates. Interconverts 7-oxo- and 7-hydroxy-neurosteroids such as 7-oxopregnenolone and 7beta-hydroxypregnenolone, 7-oxodehydroepiandrosterone (3beta-hydroxy-5-androstene-7,17-dione) and 7beta-hydroxydehydroepiandrosterone (3beta,7beta-dihydroxyandrost-5-en-17-one), among others. Catalyzes the stereo-specific conversion of the major dietary oxysterol, 7-ketocholesterol (7-oxocholesterol), into the more polar 7-beta-hydroxycholesterol metabolite. 7-oxocholesterol is one of the most important oxysterols, it participates in several events such as induction of apoptosis, accumulation in atherosclerotic lesions, lipid peroxidation, and induction of foam cell formation. Mediates the 7-oxo reduction of 7-oxolithocholate mainly to chenodeoxycholate, and to a lesser extent to ursodeoxycholate, both in its free form and when conjugated to glycine or taurine, providing a link between glucocorticoid activation and bile acid metabolism. Catalyzes the synthesis of 7-beta-25-dihydroxycholesterol from 7-oxo-25-hydroxycholesterol in vitro, which acts as a ligand for the G-protein-coupled receptor (GPCR) Epstein-Barr virus-induced gene 2 (EBI2) and may thereby regulate immune cell migration. The chain is 11-beta-hydroxysteroid dehydrogenase 1 (HSD11B1) from Cavia porcellus (Guinea pig).